The chain runs to 458 residues: Mitochondrial distribution and morphology protein 10 (458 aa).

Residues 307–339 (LDQRRTEPLDAPNTNSSVFSKERVQKKQGPKED) form a disordered region. Basic and acidic residues predominate over residues 326-339 (SKERVQKKQGPKED).

Belongs to the MDM10 family. In terms of assembly, component of the ER-mitochondria encounter structure (ERMES) or MDM complex, composed of MMM1, MDM10, MDM12 and MDM34. Associates with the mitochondrial outer membrane sorting assembly machinery SAM(core) complex.

It localises to the mitochondrion outer membrane. Functionally, component of the ERMES/MDM complex, which serves as a molecular tether to connect the endoplasmic reticulum and mitochondria. Components of this complex are involved in the control of mitochondrial shape and protein biogenesis and may function in phospholipid exchange. MDM10 is involved in the late assembly steps of the general translocase of the mitochondrial outer membrane (TOM complex). Functions in the TOM40-specific route of the assembly of outer membrane beta-barrel proteins, including the association of TOM40 with the receptor TOM22 and small TOM proteins. Can associate with the SAM(core) complex as well as the MDM12-MMM1 complex, both involved in late steps of the major beta-barrel assembly pathway, that is responsible for biogenesis of all outer membrane beta-barrel proteins. May act as a switch that shuttles between both complexes and channels precursor proteins into the TOM40-specific pathway. Plays a role in mitochondrial morphology and in the inheritance of mitochondria. The sequence is that of Mitochondrial distribution and morphology protein 10 from Lachancea thermotolerans (strain ATCC 56472 / CBS 6340 / NRRL Y-8284) (Yeast).